We begin with the raw amino-acid sequence, 461 residues long: Type IV secretion system protein PtlD homolog (461 aa).

The signal sequence occupies residues 1 to 24 (MAGLSRILLSCTLACLLAGQAAQA). Transmembrane regions (helical) follow at residues 118–138 (LQPL…YALL), 232–252 (WLLC…LAAS), 253–273 (LLIV…LFLV), 294–314 (ALVF…VLAG), and 333–353 (MLAA…VPLA). Over residues 376–411 (AHRQAAARQYAPRPAAAAAAAGPHQAGTYAASATPA) the composition is skewed to low complexity. The tract at residues 376 to 461 (AHRQAAARQY…RVLPRKPNLP (86 aa)) is disordered. Residues 439-453 (VRRDDRPAPAPDRRV) are compositionally biased toward basic and acidic residues.

It localises to the cell membrane. The polypeptide is Type IV secretion system protein PtlD homolog (ptlD) (Bordetella bronchiseptica (strain ATCC BAA-588 / NCTC 13252 / RB50) (Alcaligenes bronchisepticus)).